The chain runs to 274 residues: NH(3)-dependent NAD(+) synthetase (274 aa).

46–53 provides a ligand contact to ATP; sequence GISGGQDS. D52 is a binding site for Mg(2+). R140 provides a ligand contact to deamido-NAD(+). Residue T160 participates in ATP binding. E165 contributes to the Mg(2+) binding site. Residues K173 and D180 each contribute to the deamido-NAD(+) site. K189 and T211 together coordinate ATP. 260–261 lines the deamido-NAD(+) pocket; sequence HK.

Belongs to the NAD synthetase family. As to quaternary structure, homodimer.

The catalysed reaction is deamido-NAD(+) + NH4(+) + ATP = AMP + diphosphate + NAD(+) + H(+). It functions in the pathway cofactor biosynthesis; NAD(+) biosynthesis; NAD(+) from deamido-NAD(+) (ammonia route): step 1/1. Functionally, catalyzes the ATP-dependent amidation of deamido-NAD to form NAD. Uses ammonia as a nitrogen source. In Listeria monocytogenes serovar 1/2a (strain ATCC BAA-679 / EGD-e), this protein is NH(3)-dependent NAD(+) synthetase.